Reading from the N-terminus, the 345-residue chain is Cytoplasmic envelopment protein 2 (345 aa).

The tract at residues 26–35 (KLVGKSRKHR) is nuclear localization signal 1. The tract at residues 55 to 63 (CILCQLLLL) is nuclear export signal. Residues 90 to 94 (RRRRR) are nuclear localization signal 2.

It belongs to the herpesviridae cytoplasmic envelopment protein 2 family. In terms of assembly, interacts with cytoplasmic envelopment protein 3 and with the capsid. Interacts with host STING1; this interaction prevents viral DNA-triggered antiviral immune response.

The protein localises to the virion tegument. It localises to the host cytoplasm. It is found in the host nucleus. Its function is as follows. Plays a critical role in cytoplasmic virus egress. Participates in the final step of tegumentation and envelope acquisition within the host cytoplasm by directly interacting with the capsid. Upon virion binding to target cell, a signaling cascade is triggered to disrupt the interaction with the capsid, thereby preparing capsid uncoating. Additionally, antagonizes the viral DNA-triggered antiviral immune response by targeting host STING1 and preventing its dimerization and trafficking. The chain is Cytoplasmic envelopment protein 2 (UL94) from Human cytomegalovirus (strain AD169) (HHV-5).